A 310-amino-acid chain; its full sequence is Biotin synthase (310 aa).

The 229-residue stretch at 34–262 (GRVQLCALVN…TAQIRLSAGR (229 aa)) folds into the Radical SAM core domain. Residues Cys49, Cys53, and Cys56 each coordinate [4Fe-4S] cluster. The [2Fe-2S] cluster site is built by Cys93, Cys125, Cys185, and Arg257.

It belongs to the radical SAM superfamily. Biotin synthase family. Homodimer. It depends on [4Fe-4S] cluster as a cofactor. [2Fe-2S] cluster serves as cofactor.

The catalysed reaction is (4R,5S)-dethiobiotin + (sulfur carrier)-SH + 2 reduced [2Fe-2S]-[ferredoxin] + 2 S-adenosyl-L-methionine = (sulfur carrier)-H + biotin + 2 5'-deoxyadenosine + 2 L-methionine + 2 oxidized [2Fe-2S]-[ferredoxin]. It participates in cofactor biosynthesis; biotin biosynthesis; biotin from 7,8-diaminononanoate: step 2/2. In terms of biological role, catalyzes the conversion of dethiobiotin (DTB) to biotin by the insertion of a sulfur atom into dethiobiotin via a radical-based mechanism. In Synechococcus sp. (strain JA-3-3Ab) (Cyanobacteria bacterium Yellowstone A-Prime), this protein is Biotin synthase.